The chain runs to 1041 residues: Importin-9 (1041 aa).

Alanine 2 is subject to N-acetylalanine. The region spanning 43–119 (AEEQIKVLEV…RELLPNGLRE (77 aa)) is the Importin N-terminal domain. The segment at 936 to 967 (QATPAEWSQDDSNDMWEDQEEEEEEEEDGLAG) is disordered. Over residues 943–964 (SQDDSNDMWEDQEEEEEEEEDG) the composition is skewed to acidic residues.

This sequence belongs to the importin beta family. As to quaternary structure, interacts with histones H2A, H2B, H3 and H4. The binding is coupled to RanGTP cycles. Interacts with AKIRIN2; promoting association with pre-assembled proteasomes. Associates with pre-assembled proteasomes; interaction is indirect and mediated via interaction with AKIRIN2. Interacts with PPP2R1A and PPP2R1B.

Its subcellular location is the cytoplasm. It localises to the nucleus. Its function is as follows. Nuclear transport receptor that mediates nuclear import of proteins, such as histones, proteasome and actin. Serves as receptor for nuclear localization signals (NLS) in cargo substrates. Is thought to mediate docking of the importin/substrate complex to the nuclear pore complex (NPC) through binding to nucleoporin and the complex is subsequently translocated through the pore by an energy requiring, Ran-dependent mechanism. At the nucleoplasmic side of the NPC, Ran binds to the importin, the importin/substrate complex dissociates and importin is re-exported from the nucleus to the cytoplasm where GTP hydrolysis releases Ran. The directionality of nuclear import is thought to be conferred by an asymmetric distribution of the GTP- and GDP-bound forms of Ran between the cytoplasm and nucleus. Mediates the import of pre-assembled proteasomes into the nucleus; AKIRIN2 acts as a molecular bridge between IPO9 and the proteasome complex. Mediates the nuclear import of histones H2A, H2B, H4 and H4. In addition to nuclear import, also acts as a chaperone for histones by preventing inappropriate non-nucleosomal interactions. Mediates the nuclear import of actin. The sequence is that of Importin-9 from Homo sapiens (Human).